The primary structure comprises 36 residues: Mu/kappa-theraphotoxin-Ap1a (36 aa).

Cystine bridges form between C3–C18, C10–C23, and C17–C30. F36 is modified (phenylalanine amide).

The protein belongs to the neurotoxin 10 (Hwtx-1) family. As to expression, expressed by the venom gland.

The protein localises to the secreted. Functionally, inhibitor of voltage-gated potassium and sodium channels. Among other potassium channels, it selectively inhibits Kv10.1/KCNH1/EAG1 (IC(50)=236 nM) by shifting the voltage dependence of channel activation in a depolarising direction, it shows a maximum inhibition of 80% at saturating concentrations, it shows fast on-rates, and is poorly reversible. It also slightly affects channel inactivation, when the membrane is highly depolarised (&gt;+80 mV). It shows similar potency on Nav1.7/SCN9A (IC(50)=222 nM) and lower potency on Nav1.2/SCN2A (IC(50)=519 nM). This is Mu/kappa-theraphotoxin-Ap1a from Avicularia purpurea (Ecuadorian purple pinktoe tarantula).